Here is a 517-residue protein sequence, read N- to C-terminus: Putative pumilio homolog 21 (517 aa).

Disordered regions lie at residues 33 to 57 (NHQE…PPLL), 69 to 94 (KNNQ…PPLV), 107 to 130 (NHQE…PLLT), and 175 to 201 (FTPS…PPLS). Low complexity predominate over residues 42 to 51 (NTNINSNNNH). The span at 69–84 (KNNQEPGESGNTTINR) shows a compositional bias: polar residues. The PUM-HD domain maps to 148-502 (ESSNNNYPNL…NTLRVIQEEI (355 aa)). Residues 177-190 (PSSLTQPDDSSSRY) are compositionally biased toward polar residues. One copy of the Pumilio 1; degenerate repeat lies at 258–293 (TTKRIFLHLATNQYGSQALRILFRRSPSLDHLLFCA). The stretch at 294 to 328 (VDTNFFLLMSDKYGRGLIIPAIRAVDKTKKESLYK) is one Pumilio 2 repeat. The Pumilio 3; degenerate repeat unit spans residues 329-363 (LTYEYTLHLARLETGCLALNNVLQEIRGIYRDLIF). Pumilio repeat units follow at residues 364–400 (ECVA…AIAE), 401–437 (RLRG…EEFR), and 438–473 (GNAK…PLLR).

It localises to the cytoplasm. Functionally, sequence-specific RNA-binding protein that regulates translation and mRNA stability by binding the 3'-UTR of target mRNAs. The chain is Putative pumilio homolog 21 (APUM21) from Arabidopsis thaliana (Mouse-ear cress).